A 159-amino-acid chain; its full sequence is Large ribosomal subunit protein uL30 (159 aa).

Belongs to the universal ribosomal protein uL30 family. As to quaternary structure, part of the 50S ribosomal subunit.

The protein is Large ribosomal subunit protein uL30 of Aeropyrum pernix (strain ATCC 700893 / DSM 11879 / JCM 9820 / NBRC 100138 / K1).